The following is a 189-amino-acid chain: GTPase NRas (189 aa).

Residue 10–17 (GAGGVGKS) coordinates GTP. Positions 32-40 (YDPTIEDSY) match the Effector region motif. GTP-binding positions include 57 to 61 (DTAGQ) and 116 to 119 (NKCD). Positions 166–185 (YRMKKLNSNEDGNQGCMGLS) are hypervariable region. Residue Cys181 is the site of S-palmitoyl cysteine attachment. Residue Cys186 is the site of S-farnesyl cysteine attachment. A propeptide spans 187–189 (IVM) (removed in mature form).

It belongs to the small GTPase superfamily. Ras family. Post-translationally, palmitoylated by the ZDHHC9-GOLGA7 complex. Depalmitoylated by ABHD17A, ABHD17B and ABHD17C. A continuous cycle of de- and re-palmitoylation regulates rapid exchange between plasma membrane and Golgi.

Its subcellular location is the cell membrane. The protein localises to the golgi apparatus membrane. The catalysed reaction is GTP + H2O = GDP + phosphate + H(+). Alternates between an inactive form bound to GDP and an active form bound to GTP. Activated by a guanine nucleotide-exchange factor (GEF) and inactivated by a GTPase-activating protein (GAP). Its function is as follows. Ras proteins bind GDP/GTP and possess intrinsic GTPase activity. The protein is GTPase NRas (NRAS) of Gallus gallus (Chicken).